The primary structure comprises 227 residues: Cytochrome c oxidase subunit 2 (227 aa).

Over 1-14 (MAYPFQLGLQDATS) the chain is Mitochondrial intermembrane. The chain crosses the membrane as a helical span at residues 15 to 45 (PIMEELTNFHDHTLMIVFLISSLVLYIISLM). Topologically, residues 46 to 59 (LTTKLTHTSTMDAQ) are mitochondrial matrix. Residues 60–87 (EVETIWTILPAAILVLIALPSLRILYMM) form a helical membrane-spanning segment. Residues 88 to 227 (DEINNPALTV…YFENWSASMI (140 aa)) lie on the Mitochondrial intermembrane side of the membrane. 6 residues coordinate Cu cation: His161, Cys196, Glu198, Cys200, His204, and Met207. Glu198 lines the Mg(2+) pocket. Tyr218 is modified (phosphotyrosine).

This sequence belongs to the cytochrome c oxidase subunit 2 family. Component of the cytochrome c oxidase (complex IV, CIV), a multisubunit enzyme composed of 14 subunits. The complex is composed of a catalytic core of 3 subunits MT-CO1, MT-CO2 and MT-CO3, encoded in the mitochondrial DNA, and 11 supernumerary subunits COX4I, COX5A, COX5B, COX6A, COX6B, COX6C, COX7A, COX7B, COX7C, COX8 and NDUFA4, which are encoded in the nuclear genome. The complex exists as a monomer or a dimer and forms supercomplexes (SCs) in the inner mitochondrial membrane with NADH-ubiquinone oxidoreductase (complex I, CI) and ubiquinol-cytochrome c oxidoreductase (cytochrome b-c1 complex, complex III, CIII), resulting in different assemblies (supercomplex SCI(1)III(2)IV(1) and megacomplex MCI(2)III(2)IV(2)). Found in a complex with TMEM177, COA6, COX18, COX20, SCO1 and SCO2. Interacts with TMEM177 in a COX20-dependent manner. Interacts with COX20. Interacts with COX16. The cofactor is Cu cation.

Its subcellular location is the mitochondrion inner membrane. The catalysed reaction is 4 Fe(II)-[cytochrome c] + O2 + 8 H(+)(in) = 4 Fe(III)-[cytochrome c] + 2 H2O + 4 H(+)(out). In terms of biological role, component of the cytochrome c oxidase, the last enzyme in the mitochondrial electron transport chain which drives oxidative phosphorylation. The respiratory chain contains 3 multisubunit complexes succinate dehydrogenase (complex II, CII), ubiquinol-cytochrome c oxidoreductase (cytochrome b-c1 complex, complex III, CIII) and cytochrome c oxidase (complex IV, CIV), that cooperate to transfer electrons derived from NADH and succinate to molecular oxygen, creating an electrochemical gradient over the inner membrane that drives transmembrane transport and the ATP synthase. Cytochrome c oxidase is the component of the respiratory chain that catalyzes the reduction of oxygen to water. Electrons originating from reduced cytochrome c in the intermembrane space (IMS) are transferred via the dinuclear copper A center (CU(A)) of subunit 2 and heme A of subunit 1 to the active site in subunit 1, a binuclear center (BNC) formed by heme A3 and copper B (CU(B)). The BNC reduces molecular oxygen to 2 water molecules using 4 electrons from cytochrome c in the IMS and 4 protons from the mitochondrial matrix. In Rhabdomys pumilio (Four-striped grass mouse), this protein is Cytochrome c oxidase subunit 2 (MT-CO2).